Reading from the N-terminus, the 44-residue chain is Photosystem I reaction center subunit IX 2 (44 aa).

Residues 13 to 35 traverse the membrane as a helical segment; that stretch reads APVLATLWLSSTAVILIGVNSYF.

Belongs to the PsaJ family.

The protein localises to the cellular thylakoid membrane. Its function is as follows. May help in the organization of the PsaE and PsaF subunits. The sequence is that of Photosystem I reaction center subunit IX 2 (psaJ2) from Prochlorococcus marinus (strain NATL2A).